The primary structure comprises 2291 residues: Protein Ycf2 A (2291 aa).

Position 1642–1649 (1642–1649 (GSIGTGRS)) interacts with ATP.

This sequence belongs to the Ycf2 family.

It localises to the plastid. It is found in the chloroplast stroma. Its function is as follows. Probable ATPase of unknown function. Its presence in a non-photosynthetic plant (Epifagus virginiana) and experiments in tobacco indicate that it has an essential function which is probably not related to photosynthesis. This chain is Protein Ycf2 A (ycf2-A), found in Atropa belladonna (Belladonna).